We begin with the raw amino-acid sequence, 1150 residues long: Serine/threonine-protein phosphatase 2A regulatory subunit B'' subunit alpha (1150 aa).

A disordered region spans residues 661-693 (PEVIKIQNKPEKKPGTPLPPPATSPSSPRPLSP). Over residues 676–693 (TPLPPPATSPSSPRPLSP) the composition is skewed to pro residues. 2 EF-hand domains span residues 758–793 (CPLY…LLNN) and 972–1007 (RNPT…QCER). 4 residues coordinate Ca(2+): Asp-985, Asp-987, Asp-989, and Glu-996. Residues 1105–1132 (AQFQEGFEDYETDEPASPSEFGNKSNKI) are disordered.

As to quaternary structure, PP2A consists of a common heterodimeric core enzyme, composed of a 36 kDa catalytic subunit (subunit C) and a 65 kDa constant regulatory subunit (PR65 or subunit A), that associates with a variety of regulatory subunits. Proteins that associate with the core dimer include three families of regulatory subunits B (the R2/B/PR55/B55, R3/B''/PR72/PR130/PR59 and R5/B'/B56 families), the 48 kDa variable regulatory subunit, viral proteins, and cell signaling molecules. As to expression, expressed in heart, brain, placenta, lung, muscle and kidney.

Functionally, the B regulatory subunit might modulate substrate selectivity and catalytic activity, and might also direct the localization of the catalytic enzyme to a particular subcellular compartment. This is Serine/threonine-protein phosphatase 2A regulatory subunit B'' subunit alpha (PPP2R3A) from Homo sapiens (Human).